Here is a 389-residue protein sequence, read N- to C-terminus: S-adenosylmethionine synthase (389 aa).

Residue His-15 coordinates ATP. Asp-17 contributes to the Mg(2+) binding site. Glu-43 contacts K(+). The L-methionine site is built by Glu-56 and Gln-99. Residues 99–109 are flexible loop; the sequence is QSPDIAQGVNE. ATP is bound by residues 166 to 168, 234 to 235, Asp-243, 249 to 250, Ala-266, and Lys-270; these read DAK, RF, and RK. L-methionine is bound at residue Asp-243. Lys-274 provides a ligand contact to L-methionine.

The protein belongs to the AdoMet synthase family. Homotetramer; dimer of dimers. Mg(2+) is required as a cofactor. It depends on K(+) as a cofactor.

Its subcellular location is the cytoplasm. It catalyses the reaction L-methionine + ATP + H2O = S-adenosyl-L-methionine + phosphate + diphosphate. It participates in amino-acid biosynthesis; S-adenosyl-L-methionine biosynthesis; S-adenosyl-L-methionine from L-methionine: step 1/1. Its function is as follows. Catalyzes the formation of S-adenosylmethionine (AdoMet) from methionine and ATP. The overall synthetic reaction is composed of two sequential steps, AdoMet formation and the subsequent tripolyphosphate hydrolysis which occurs prior to release of AdoMet from the enzyme. This chain is S-adenosylmethionine synthase, found in Neisseria meningitidis serogroup C / serotype 2a (strain ATCC 700532 / DSM 15464 / FAM18).